The chain runs to 582 residues: Methionine--tRNA ligase (582 aa).

The short motif at 24-34 (PYIYAVPHLGN) is the 'HIGH' region element. Zn(2+) is bound by residues cysteine 156, cysteine 159, cysteine 169, and cysteine 172. A 'KMSKS' region motif is present at residues 346 to 350 (KFSKS). Residue lysine 349 participates in ATP binding.

This sequence belongs to the class-I aminoacyl-tRNA synthetase family. MetG type 1 subfamily. Zn(2+) is required as a cofactor.

The protein localises to the cytoplasm. It carries out the reaction tRNA(Met) + L-methionine + ATP = L-methionyl-tRNA(Met) + AMP + diphosphate. In terms of biological role, is required not only for elongation of protein synthesis but also for the initiation of all mRNA translation through initiator tRNA(fMet) aminoacylation. In Caldivirga maquilingensis (strain ATCC 700844 / DSM 13496 / JCM 10307 / IC-167), this protein is Methionine--tRNA ligase.